Consider the following 60-residue polypeptide: Cytotoxin 6 (60 aa).

Disulfide bonds link Cys-3–Cys-21, Cys-14–Cys-38, Cys-42–Cys-53, and Cys-54–Cys-59.

This sequence belongs to the three-finger toxin family. Short-chain subfamily. Type IA cytotoxin sub-subfamily. As to quaternary structure, monomer in solution; Homodimer and oligomer in the presence of negatively charged lipids forming a pore with a size ranging between 20 and 30 Angstroms. As to expression, expressed by the venom gland.

It localises to the secreted. The protein resides in the target cell membrane. In terms of biological role, shows cytolytic activity on many different cells by forming pore in lipid membranes. In vivo, increases heart rate or kills the animal by cardiac arrest. In addition, it binds to heparin with high affinity, interacts with Kv channel-interacting protein 1 (KCNIP1) in a calcium-independent manner, and binds to integrin alpha-V/beta-3 (ITGAV/ITGB3) with moderate affinity. This is Cytotoxin 6 from Naja annulifera (Banded Egyptian cobra).